A 130-amino-acid polypeptide reads, in one-letter code: Small ribosomal subunit protein uS11c (130 aa).

This sequence belongs to the universal ribosomal protein uS11 family. Part of the 30S ribosomal subunit.

It is found in the plastid. Its subcellular location is the chloroplast. The chain is Small ribosomal subunit protein uS11c from Anthoceros angustus (Hornwort).